Reading from the N-terminus, the 154-residue chain is Protein X (154 aa).

The interval 68–117 is mitochondrial targeting sequence; the sequence is PCALRFTSARCMETTVNAHQILPKVLHKRTLGLPAMSTTDLEAYFKDCVF.

Belongs to the orthohepadnavirus protein X family. May form homodimer. May interact with host CEBPA, CFLAR, CREB1, DDB1, E4F1, HBXIP, HSPD1/HSP60, NFKBIA, POLR2E and SMAD4. Interacts with host SMC5-SMC6 complex and induces its degradation. Interacts with host TRPC4AP; leading to prevent ubiquitination of TRPC4AP. Interacts with host PLSCR1; this interaction promotes ubiquitination and degradation of HBx and impairs HBx-mediated cell proliferation. A fraction may be phosphorylated in insect cells and HepG2 cells, a human hepatoblastoma cell line. Phosphorylated in vitro by host protein kinase C or mitogen-activated protein kinase. N-acetylated in insect cells.

The protein localises to the host cytoplasm. It is found in the host nucleus. It localises to the host mitochondrion. In terms of biological role, multifunctional protein that plays a role in silencing host antiviral defenses and promoting viral transcription. Does not seem to be essential for HBV infection. May be directly involved in development of cirrhosis and liver cancer (hepatocellular carcinoma). Most of cytosolic activities involve modulation of cytosolic calcium. The effect on apoptosis is controversial depending on the cell types in which the studies have been conducted. May induce apoptosis by localizing in mitochondria and causing loss of mitochondrial membrane potential. May also modulate apoptosis by binding host CFLAR, a key regulator of the death-inducing signaling complex (DISC). Promotes viral transcription by using the host E3 ubiquitin ligase DDB1 to target the SMC5-SMC6 complex to proteasomal degradation. This host complex would otherwise bind to viral episomal DNA, and prevents its transcription. Moderately stimulates transcription of many different viral and cellular transcription elements. Promoters and enhancers stimulated by HBx contain DNA binding sites for NF-kappa-B, AP-1, AP-2, c-EBP, ATF/CREB, or the calcium-activated factor NF-AT. The polypeptide is Protein X (Hepatitis B virus genotype A2 subtype adw2 (strain Rutter 1979) (HBV-A)).